Here is a 351-residue protein sequence, read N- to C-terminus: Ferredoxin--NADP reductase (351 aa).

FAD is bound by residues Thr14, Asp33, Gln41, Tyr46, Ala86, Phe121, Asp287, and Thr328.

It belongs to the ferredoxin--NADP reductase type 2 family. In terms of assembly, homodimer. Requires FAD as cofactor.

The enzyme catalyses 2 reduced [2Fe-2S]-[ferredoxin] + NADP(+) + H(+) = 2 oxidized [2Fe-2S]-[ferredoxin] + NADPH. This is Ferredoxin--NADP reductase from Flavobacterium psychrophilum (strain ATCC 49511 / DSM 21280 / CIP 103535 / JIP02/86).